Reading from the N-terminus, the 172-residue chain is ATP synthase subunit b (172 aa).

Residues 13–33 (GINGGDILFQLVMFLILLALL) traverse the membrane as a helical segment.

This sequence belongs to the ATPase B chain family. In terms of assembly, F-type ATPases have 2 components, F(1) - the catalytic core - and F(0) - the membrane proton channel. F(1) has five subunits: alpha(3), beta(3), gamma(1), delta(1), epsilon(1). F(0) has three main subunits: a(1), b(2) and c(10-14). The alpha and beta chains form an alternating ring which encloses part of the gamma chain. F(1) is attached to F(0) by a central stalk formed by the gamma and epsilon chains, while a peripheral stalk is formed by the delta and b chains.

The protein resides in the cell membrane. Its function is as follows. F(1)F(0) ATP synthase produces ATP from ADP in the presence of a proton or sodium gradient. F-type ATPases consist of two structural domains, F(1) containing the extramembraneous catalytic core and F(0) containing the membrane proton channel, linked together by a central stalk and a peripheral stalk. During catalysis, ATP synthesis in the catalytic domain of F(1) is coupled via a rotary mechanism of the central stalk subunits to proton translocation. Functionally, component of the F(0) channel, it forms part of the peripheral stalk, linking F(1) to F(0). The chain is ATP synthase subunit b from Priestia megaterium (strain ATCC 12872 / QMB1551) (Bacillus megaterium).